A 237-amino-acid polypeptide reads, in one-letter code: U2 small nuclear ribonucleoprotein A' (237 aa).

3 LRR repeats span residues 53–74, 75–95, and 97–118; these read RTNI…GHND, TVHT…SRLP, and YLVN…QGLR. The LRRCT domain maps to 132–170; sequence NVICHKEQYRETVIALCPQLAVLDGERVRQAERQAAPQN. Residues 161–182 form a disordered region; that stretch reads QAERQAAPQNEKTDTPTEGPQP.

Belongs to the U2 small nuclear ribonucleoprotein A family. Associated with the spliceosome.

The protein resides in the nucleus. Its function is as follows. Involved in pre-mRNA splicing. This is U2 small nuclear ribonucleoprotein A' (LEA1) from Eremothecium gossypii (strain ATCC 10895 / CBS 109.51 / FGSC 9923 / NRRL Y-1056) (Yeast).